A 556-amino-acid polypeptide reads, in one-letter code: General transcription factor IIF subunit 1 (556 aa).

Disordered stretches follow at residues 82–128 (TMTS…PAAA) and 226–499 (SRLQ…PFTE). Residues 84–128 (TSAPNGTNSTGTTPNTTTTTTTTTTTTTTTTTAAGTPGAPNPAAA) show a composition bias toward low complexity. A compositionally biased stretch (basic and acidic residues) spans 245-275 (SGKKSIEELEEAEHRNRNEDPNRYKTTNEEK). Composition is skewed to acidic residues over residues 291–338 (GNGE…DVDL) and 378–394 (GDDEDDDEDDEDPDQDD). 2 stretches are compositionally biased toward basic and acidic residues: residues 415–427 (VKKEDDGGKDSKS) and 450–461 (NKSDSSVDNRES). Residues 469–492 (SSPQAVQPNSPSQQQQQQQQNIDP) are compositionally biased toward low complexity.

Belongs to the TFIIF alpha subunit family. In terms of assembly, heterodimer of an alpha and a beta subunit.

It localises to the nucleus. Its function is as follows. TFIIF is a general transcription initiation factor that binds to RNA polymerase II and helps to recruit it to the initiation complex in collaboration with TFIIB. It promotes transcription elongation. The polypeptide is General transcription factor IIF subunit 1 (gtf2f1) (Dictyostelium discoideum (Social amoeba)).